The sequence spans 491 residues: 3-octaprenyl-4-hydroxybenzoate carboxy-lyase (491 aa).

Position 172 (Asn172) interacts with Mn(2+). Prenylated FMN contacts are provided by residues 175–177, 189–191, and 194–195; these read IYR, RWL, and RG. Glu238 serves as a coordination point for Mn(2+). The Proton donor role is filled by Asp287.

The protein belongs to the UbiD family. As to quaternary structure, homohexamer. Prenylated FMN serves as cofactor. Mn(2+) is required as a cofactor.

The protein resides in the cell membrane. It carries out the reaction a 4-hydroxy-3-(all-trans-polyprenyl)benzoate + H(+) = a 2-(all-trans-polyprenyl)phenol + CO2. Its pathway is cofactor biosynthesis; ubiquinone biosynthesis. Functionally, catalyzes the decarboxylation of 3-octaprenyl-4-hydroxy benzoate to 2-octaprenylphenol, an intermediate step in ubiquinone biosynthesis. The sequence is that of 3-octaprenyl-4-hydroxybenzoate carboxy-lyase from Alcanivorax borkumensis (strain ATCC 700651 / DSM 11573 / NCIMB 13689 / SK2).